Here is a 340-residue protein sequence, read N- to C-terminus: DNA-directed RNA polymerase subunit alpha (340 aa).

The segment at 1–236 (MSVIQKNWQE…DQLQLFINFE (236 aa)) is alpha N-terminal domain (alpha-NTD). The alpha C-terminal domain (alpha-CTD) stretch occupies residues 252–340 (FNKNLLRKVD…DLAKKLEEPY (89 aa)).

Belongs to the RNA polymerase alpha chain family. Homodimer. The RNAP catalytic core consists of 2 alpha, 1 beta, 1 beta' and 1 omega subunit. When a sigma factor is associated with the core the holoenzyme is formed, which can initiate transcription.

The enzyme catalyses RNA(n) + a ribonucleoside 5'-triphosphate = RNA(n+1) + diphosphate. In terms of biological role, DNA-dependent RNA polymerase catalyzes the transcription of DNA into RNA using the four ribonucleoside triphosphates as substrates. The protein is DNA-directed RNA polymerase subunit alpha of Rhodospirillum rubrum (strain ATCC 11170 / ATH 1.1.1 / DSM 467 / LMG 4362 / NCIMB 8255 / S1).